The chain runs to 460 residues: Homocitrate synthase (460 aa).

In terms of domain architecture, Pyruvate carboxyltransferase spans 3-258 (VGILDSTLRE…IEVVKLNKLQ (256 aa)). 2-oxoglutarate is bound at residue Arg11. Glu12 serves as a coordination point for Mg(2+). The 2-oxoglutarate site is built by His75, Arg135, and Thr169. His197 and His199 together coordinate Mg(2+). His291 functions as the Proton acceptor in the catalytic mechanism.

The protein belongs to the alpha-IPM synthase/homocitrate synthase family. Homocitrate synthase LYS20/LYS21 subfamily. Forms a homotetramer in the absence of lysine, and is in hexadecamer-octamer equilibrium in the presence of lysine. Mg(2+) serves as cofactor. The cofactor is Mn(2+).

It catalyses the reaction acetyl-CoA + 2-oxoglutarate + H2O = (2R)-homocitrate + CoA + H(+). Its pathway is amino-acid biosynthesis; L-lysine biosynthesis via AAA pathway; L-alpha-aminoadipate from 2-oxoglutarate: step 1/5. Its activity is regulated as follows. Inhibited by lysine. Functionally, catalyzes the aldol-type condensation of 2-oxoglutarate with acetyl-CoA to yield homocitrate. Carries out the first step of the alpha-aminoadipate (AAA) lysine biosynthesis pathway. The sequence is that of Homocitrate synthase from Sulfurisphaera tokodaii (strain DSM 16993 / JCM 10545 / NBRC 100140 / 7) (Sulfolobus tokodaii).